A 290-amino-acid polypeptide reads, in one-letter code: Phosphoribosylaminoimidazole-succinocarboxamide synthase (290 aa).

The protein belongs to the SAICAR synthetase family.

It catalyses the reaction 5-amino-1-(5-phospho-D-ribosyl)imidazole-4-carboxylate + L-aspartate + ATP = (2S)-2-[5-amino-1-(5-phospho-beta-D-ribosyl)imidazole-4-carboxamido]succinate + ADP + phosphate + 2 H(+). Its pathway is purine metabolism; IMP biosynthesis via de novo pathway; 5-amino-1-(5-phospho-D-ribosyl)imidazole-4-carboxamide from 5-amino-1-(5-phospho-D-ribosyl)imidazole-4-carboxylate: step 1/2. The polypeptide is Phosphoribosylaminoimidazole-succinocarboxamide synthase (Haemophilus influenzae (strain PittEE)).